Consider the following 100-residue polypeptide: ESAT-6-like protein EsxB (100 aa).

The disordered stretch occupies residues G80–I100.

The protein belongs to the WXG100 family. CFP-10 subfamily. In terms of assembly, forms a tight 1:1 complex with EsxA. An artificial EsxA-EsxB heterodimer interacts with EspA.

It localises to the secreted. In terms of biological role, an exported protein. Plays a role in DNA conjugation, in at least a donor strain. The protein is ESAT-6-like protein EsxB of Mycolicibacterium smegmatis (strain ATCC 700084 / mc(2)155) (Mycobacterium smegmatis).